A 450-amino-acid chain; its full sequence is Caspase Dronc (450 aa).

Positions methionine 1–valine 134 are excised as a propeptide. One can recognise a CARD domain in the interval glutamate 64–valine 109. The interval serine 114 to arginine 125 is required for binding Diap1. Active-site residues include histidine 271 and cysteine 318. The propeptide occupies aspartate 321 to aspartate 324.

This sequence belongs to the peptidase C14A family. Interacts (via residues 114-125) with Diap1 (via BIR 2 domain); binding blocks Dronc-mediated cell death. Can form a stable complex with Drice. Rpr, hid and grim can out-compete Dronc for binding Diap1, therefore removing Diap1-mediated ubiquitination. Interacts (via CARD domain) with Dark (via Dark CARD and WD domains); the interaction stimulates Dark oligomerization to form the apoptosome and brings pairs of Dronc molecules together on the apoptosome to facilitate their dimerization and activation by autocatalytic cleavage. Binding to Dark stimulates apoptosome assembly. After autocatalytic cleavage the Dronc caspase domain dissociates from the apoptosome but the CARD domain remains associated. Ubiquitinated by Diap1, leading to its subsequent degradation. In terms of tissue distribution, ubiquitously expressed in embryos during early stages of development. In late third instar larvae, dramatic up-regulation in salivary glands and midgut before histolysis of these tissues.

It is found in the cytoplasm. The catalysed reaction is Strict requirement for an Asp residue at position P1 and with a marked preference for His at position P2. It has a preferred cleavage sequence of Leu-Gly-His-Asp-|-Xaa.. With respect to regulation, zymogen activated by autocatalytic cleavage; association with the Dark apoptosome brings multiple molecules together to facilitate their dimerization and activation by autocatalytic cleavage. Involved in the activation cascade of caspases responsible for apoptosis execution. Effector of steroid-mediated apoptosis during insect metamorphosis. Overexpression promotes programmed cell death. Interaction with Diap1 is required to suppress Dronc-mediated cell death; via Diap1-mediated ubiquitination of Dronc. Rate-limiting caspase in rpr, grim and hid death pathway. Recruited to the Dark apoptosome, an adapter protein complex that mediates activation of the caspase cascade in programmed cell death initiated by the intrinsic apoptosis pathway. Association with the Dark apoptosome stimulates autocatalytic cleavage and activation of Dronc, promoting Dronc-mediated cleavage of downstream effector caspases such as Drice. The polypeptide is Caspase Dronc (Drosophila melanogaster (Fruit fly)).